The following is a 245-amino-acid chain: Polynucleotide 3'-phosphatase (245 aa).

This sequence belongs to the DNA 3' phosphatase family.

It is found in the nucleus. It carries out the reaction a 3'end (2'-deoxyribonucleotide 3'-phosphate)-DNA + H2O = a 3'-end 2'-deoxyribonucleotide-DNA + phosphate. Functionally, dephosphorylate DNA's 3'-phosphate termini. Has a role in the repair of breaks in single-stranded DNA. The chain is Polynucleotide 3'-phosphatase (TPP1) from Saccharomyces mikatae (Yeast).